Consider the following 313-residue polypeptide: Dehydrogenase/reductase SDR family member 1 (313 aa).

Ile-19 is an NAD(+) binding site. Arg-21 is subject to Omega-N-methylarginine. Asp-64 is an NAD(+) binding site. Ser-151 serves as a coordination point for substrate. 3 residues coordinate NAD(+): Tyr-163, Lys-167, and Thr-198. Tyr-163 acts as the Proton acceptor in catalysis.

The protein belongs to the short-chain dehydrogenases/reductases (SDR) family.

It localises to the endoplasmic reticulum. It catalyses the reaction 17alpha-estradiol + NADP(+) = estrone + NADPH + H(+). The catalysed reaction is testosterone + NADP(+) = androst-4-ene-3,17-dione + NADPH + H(+). It carries out the reaction prostaglandin E1 + NADPH + H(+) = prostaglandin F1 + NADP(+). The enzyme catalyses isatin + NADPH + H(+) = 3-hydroxyindolin-2-one + NADP(+). Its function is as follows. NADPH-dependent oxidoreductase which catalyzes the reduction of some steroids (estrone, androstene-3,17-dione and cortisone) as well as prostaglandin E1, isatin and xenobiotics in vitro. May have a role in steroid and/or xenobiotic metabolism. The chain is Dehydrogenase/reductase SDR family member 1 from Mus musculus (Mouse).